The chain runs to 310 residues: Lipoyl synthase (310 aa).

[4Fe-4S] cluster is bound by residues cysteine 54, cysteine 59, cysteine 65, cysteine 80, cysteine 84, cysteine 87, and serine 295. Positions 66–284 (FASGTATFLI…LFGEDNLGFM (219 aa)) constitute a Radical SAM core domain.

Belongs to the radical SAM superfamily. Lipoyl synthase family. [4Fe-4S] cluster is required as a cofactor.

It is found in the cytoplasm. It catalyses the reaction [[Fe-S] cluster scaffold protein carrying a second [4Fe-4S](2+) cluster] + N(6)-octanoyl-L-lysyl-[protein] + 2 oxidized [2Fe-2S]-[ferredoxin] + 2 S-adenosyl-L-methionine + 4 H(+) = [[Fe-S] cluster scaffold protein] + N(6)-[(R)-dihydrolipoyl]-L-lysyl-[protein] + 4 Fe(3+) + 2 hydrogen sulfide + 2 5'-deoxyadenosine + 2 L-methionine + 2 reduced [2Fe-2S]-[ferredoxin]. Its pathway is protein modification; protein lipoylation via endogenous pathway; protein N(6)-(lipoyl)lysine from octanoyl-[acyl-carrier-protein]: step 2/2. Its function is as follows. Catalyzes the radical-mediated insertion of two sulfur atoms into the C-6 and C-8 positions of the octanoyl moiety bound to the lipoyl domains of lipoate-dependent enzymes, thereby converting the octanoylated domains into lipoylated derivatives. In Prochlorococcus marinus (strain MIT 9215), this protein is Lipoyl synthase.